Here is a 234-residue protein sequence, read N- to C-terminus: Fibronectin type III domain-containing protein 4 (234 aa).

The signal sequence occupies residues 1-44 (MPSGCHSSPPSGLRGDMASLVPLSPYLSPTVLLLVSCDLGFVRA). Residues 45–167 (DRPPSPVNVT…GLDGERPLQT (123 aa)) are Extracellular-facing. In terms of domain architecture, Fibronectin type-III spans 47–140 (PPSPVNVTVT…PRVHFRTLKG (94 aa)). N-linked (GlcNAc...) asparagine glycosylation is found at Asn52, Asn97, and Asn147. A disordered region spans residues 122-160 (GLRGESPPGPRVHFRTLKGSDRLPSNSSSPGDITVEGLD). Residues 168-188 (GEVVIIVVVLLMWAAVIGLFC) form a helical membrane-spanning segment. Residues 189-234 (RQYDIIKDNDSNNNPKEKGKGPEQSPQGRPVGTRQKKSPSINTIDV) lie on the Cytoplasmic side of the membrane. Residues 197-209 (NDSNNNPKEKGKG) show a composition bias toward basic and acidic residues. A disordered region spans residues 197–234 (NDSNNNPKEKGKGPEQSPQGRPVGTRQKKSPSINTIDV).

In terms of tissue distribution, highly expressed in the liver and the brain, including in the cortex, hypothalamus and hippocampus. Also expressed in adipose tissue.

The protein resides in the membrane. Its subcellular location is the secreted. Has anti-inflammatory properties. In the colon, acts on macrophages to down-regulate inflammation. May suppress osteoclastogenesis and mature osteoclast resorptive function. In white adipose tissue, decreases local inflammation, via interaction with GPR116. Also required for proper systemic glucose tolerance, specifically sensitizing white adipocytes to insulin and promoting glucose uptake. The insulin sensitizing function in adipose tissue is mediated by interaction with ADGRF5/GPR116 and activation of cAMP signaling. The polypeptide is Fibronectin type III domain-containing protein 4 (FNDC4) (Homo sapiens (Human)).